Reading from the N-terminus, the 471-residue chain is 6-phosphofructo-2-kinase/fructose-2,6-bisphosphatase 1 (471 aa).

The residue at position 2 (Ser2) is an N-acetylserine. A 6-phosphofructo-2-kinase region spans residues 2–250 (SREMGELTQT…AYYLMNIHVT (249 aa)). Ser33 is subject to Phosphoserine; by PKA. 49–57 (GLPARGKTY) provides a ligand contact to ATP. Beta-D-fructose 6-phosphate is bound by residues Arg82 and Arg105. Asp131 is an active-site residue. Thr133 and Arg139 together coordinate beta-D-fructose 6-phosphate. Ser141 is subject to Phosphoserine. Cys161 is an active-site residue. 170–175 (NIKQVK) lines the ATP pocket. Beta-D-fructose 6-phosphate contacts are provided by Lys175, Arg196, and Tyr200. The fructose-2,6-bisphosphatase stretch occupies residues 251-471 (PRSIYLCRHG…EALDTVPAHY (221 aa)). Arg258 contacts beta-D-fructose 2,6-bisphosphate. The active-site Tele-phosphohistidine intermediate is His259. Asn265, Gly271, and Arg308 together coordinate beta-D-fructose 2,6-bisphosphate. The Proton donor/acceptor role is filled by Glu328. The beta-D-fructose 2,6-bisphosphate site is built by Tyr339, Arg353, Lys357, Tyr368, Gln394, and Arg398. Residue 350–353 (FALR) participates in ATP binding. ATP-binding positions include 394 to 398 (QAVMR) and Tyr430.

This sequence in the C-terminal section; belongs to the phosphoglycerate mutase family. Homodimer. In terms of tissue distribution, liver.

It catalyses the reaction beta-D-fructose 2,6-bisphosphate + H2O = beta-D-fructose 6-phosphate + phosphate. The catalysed reaction is beta-D-fructose 6-phosphate + ATP = beta-D-fructose 2,6-bisphosphate + ADP + H(+). With respect to regulation, phosphorylation at Ser-33 inhibits the kinase and activates the bisphosphatase. Functionally, synthesis and degradation of fructose 2,6-bisphosphate. The polypeptide is 6-phosphofructo-2-kinase/fructose-2,6-bisphosphatase 1 (Rattus norvegicus (Rat)).